We begin with the raw amino-acid sequence, 87 residues long: Small ribosomal subunit protein bS20 (87 aa).

The segment at 1 to 26 is disordered; the sequence is MANHKSAIKRHKQSQKRAARNRAAKT.

The protein belongs to the bacterial ribosomal protein bS20 family.

Binds directly to 16S ribosomal RNA. The sequence is that of Small ribosomal subunit protein bS20 from Nitratidesulfovibrio vulgaris (strain DSM 19637 / Miyazaki F) (Desulfovibrio vulgaris).